We begin with the raw amino-acid sequence, 257 residues long: Probable ABC transporter arginine-binding protein ArtJ (257 aa).

Residues Met-1–Gly-23 form the signal peptide. L-arginine is bound by residues Asn-41, Glu-48, Gly-100, Ser-102, Arg-107, and Tyr-151.

The protein belongs to the bacterial solute-binding protein 3 family.

The protein localises to the secreted. The protein resides in the cell surface. Probably part of an ABC transporter complex involved in arginine transport. Binds arginine. Interacts with host epithelial cells, suggesting a role in host-cell adhesion during infection. The sequence is that of Probable ABC transporter arginine-binding protein ArtJ from Chlamydia trachomatis serovar D (strain ATCC VR-885 / DSM 19411 / UW-3/Cx).